The sequence spans 361 residues: 5-formaminoimidazole-4-carboxamide-1-(beta)-D-ribofuranosyl 5'-monophosphate synthetase (361 aa).

2 residues coordinate 5-amino-1-(5-phospho-beta-D-ribosyl)imidazole-4-carboxamide: His-27 and Ser-94. In terms of domain architecture, ATP-grasp spans Arg-116–Lys-348. Residues Pro-146–Cys-208 and Glu-230 contribute to the ATP site. Position 258 (Asn-258) interacts with 5-amino-1-(5-phospho-beta-D-ribosyl)imidazole-4-carboxamide. Mg(2+) contacts are provided by Gln-297 and Glu-310.

The protein belongs to the phosphohexose mutase family. It depends on Mg(2+) as a cofactor. Mn(2+) serves as cofactor.

The enzyme catalyses 5-amino-1-(5-phospho-beta-D-ribosyl)imidazole-4-carboxamide + formate + ATP = 5-formamido-1-(5-phospho-D-ribosyl)imidazole-4-carboxamide + ADP + phosphate. Its pathway is purine metabolism; IMP biosynthesis via de novo pathway; 5-formamido-1-(5-phospho-D-ribosyl)imidazole-4-carboxamide from 5-amino-1-(5-phospho-D-ribosyl)imidazole-4-carboxamide (formate route): step 1/1. Its function is as follows. Catalyzes the ATP- and formate-dependent formylation of 5-aminoimidazole-4-carboxamide-1-beta-d-ribofuranosyl 5'-monophosphate (AICAR) to 5-formaminoimidazole-4-carboxamide-1-beta-d-ribofuranosyl 5'-monophosphate (FAICAR) in the absence of folates. This Methanococcus aeolicus (strain ATCC BAA-1280 / DSM 17508 / OCM 812 / Nankai-3) protein is 5-formaminoimidazole-4-carboxamide-1-(beta)-D-ribofuranosyl 5'-monophosphate synthetase.